The chain runs to 1313 residues: Inactive protein tyrosine kinase pTKL (1313 aa).

MORN repeat units lie at residues 20–42 (YAGDLNVDNLPHGRGLMLYENGN) and 45–63 (FGHFINGKKHGKGIYIDKN). N63, N131, N178, N208, N254, N260, and N288 each carry an N-linked (GlcNAc...) asparagine glycan. Residues 300–365 (WNKEQVAQWL…LQLIKNLRVT (66 aa)) enclose the SAM domain. 5 N-linked (GlcNAc...) asparagine glycosylation sites follow: N466, N516, N525, N528, and N534. Positions 569-580 (EPIKPNKEKEEN) are enriched in basic and acidic residues. Residues 569–631 (EPIKPNKEKE…SEKSSETSSE (63 aa)) form a disordered region. Over residues 586-604 (PIINSKNETNLLNDSNPTK) the composition is skewed to polar residues. Residues N592, N598, N661, N678, N729, N735, and N749 are each glycosylated (N-linked (GlcNAc...) asparagine). K782 is an ATP binding site. N790, N868, N940, N983, and N1000 each carry an N-linked (GlcNAc...) asparagine glycan. Residues 962–1294 (FRNKNNILCG…FDRILIEISM (333 aa)) enclose the Protein kinase domain. The RVxF motif motif lies at 1052–1055 (KILF). 2 N-linked (GlcNAc...) asparagine glycosylation sites follow: N1191 and N1198.

It belongs to the protein kinase superfamily. TKL Ser/Thr protein kinase family.

The protein localises to the parasitophorous vacuole. It localises to the host cell membrane. The protein resides in the host cytoplasm. It is found in the host cytoskeleton. This chain is Inactive protein tyrosine kinase pTKL, found in Plasmodium berghei (strain Anka).